Reading from the N-terminus, the 486-residue chain is Ribosomal RNA small subunit methyltransferase F (486 aa).

Residues 124-130 (ASAPGSK), Glu-148, Asp-175, and Asp-193 each bind S-adenosyl-L-methionine. Residue Cys-246 is the Nucleophile of the active site.

It belongs to the class I-like SAM-binding methyltransferase superfamily. RsmB/NOP family.

Its subcellular location is the cytoplasm. The enzyme catalyses cytidine(1407) in 16S rRNA + S-adenosyl-L-methionine = 5-methylcytidine(1407) in 16S rRNA + S-adenosyl-L-homocysteine + H(+). Functionally, specifically methylates the cytosine at position 1407 (m5C1407) of 16S rRNA. This chain is Ribosomal RNA small subunit methyltransferase F, found in Shewanella baltica (strain OS195).